Reading from the N-terminus, the 273-residue chain is Dermonecrotic toxin LafSicTox-betaIE1 (273 aa).

H5 is an active-site residue. E25 and D27 together coordinate Mg(2+). H41 acts as the Nucleophile in catalysis. 2 disulfide bridges follow: C45–C51 and C47–C189. D85 serves as a coordination point for Mg(2+). Residue N250 is glycosylated (N-linked (GlcNAc...) asparagine).

It belongs to the arthropod phospholipase D family. Class II subfamily. The cofactor is Mg(2+). As to expression, expressed by the venom gland.

Its subcellular location is the secreted. It catalyses the reaction an N-(acyl)-sphingosylphosphocholine = an N-(acyl)-sphingosyl-1,3-cyclic phosphate + choline. It carries out the reaction an N-(acyl)-sphingosylphosphoethanolamine = an N-(acyl)-sphingosyl-1,3-cyclic phosphate + ethanolamine. The catalysed reaction is a 1-acyl-sn-glycero-3-phosphocholine = a 1-acyl-sn-glycero-2,3-cyclic phosphate + choline. The enzyme catalyses a 1-acyl-sn-glycero-3-phosphoethanolamine = a 1-acyl-sn-glycero-2,3-cyclic phosphate + ethanolamine. Dermonecrotic toxins cleave the phosphodiester linkage between the phosphate and headgroup of certain phospholipids (sphingolipid and lysolipid substrates), forming an alcohol (often choline) and a cyclic phosphate. This toxin acts on sphingomyelin (SM). It may also act on ceramide phosphoethanolamine (CPE), lysophosphatidylcholine (LPC) and lysophosphatidylethanolamine (LPE), but not on lysophosphatidylserine (LPS), and lysophosphatidylglycerol (LPG). It acts by transphosphatidylation, releasing exclusively cyclic phosphate products as second products. Induces dermonecrosis, hemolysis, increased vascular permeability, edema, inflammatory response, and platelet aggregation. This Loxosceles aff. spinulosa (strain GJB-2008) (Recluse spider) protein is Dermonecrotic toxin LafSicTox-betaIE1.